The chain runs to 89 residues: Small ribosomal subunit protein uS15 (89 aa).

Residues 1–21 are compositionally biased toward basic and acidic residues; that stretch reads MALTTEEKKQVLSEYGLHETD. The disordered stretch occupies residues 1–24; that stretch reads MALTTEEKKQVLSEYGLHETDTGS.

Belongs to the universal ribosomal protein uS15 family. In terms of assembly, part of the 30S ribosomal subunit. Forms a bridge to the 50S subunit in the 70S ribosome, contacting the 23S rRNA.

One of the primary rRNA binding proteins, it binds directly to 16S rRNA where it helps nucleate assembly of the platform of the 30S subunit by binding and bridging several RNA helices of the 16S rRNA. Functionally, forms an intersubunit bridge (bridge B4) with the 23S rRNA of the 50S subunit in the ribosome. The chain is Small ribosomal subunit protein uS15 from Rhodococcus opacus (strain B4).